We begin with the raw amino-acid sequence, 147 residues long: Neocarzinostatin (147 aa).

Positions 1-34 (MVPISIIRNRVAKVAVGSAAVLGLAVGFQTPAVA) are cleaved as a signal peptide. 2 disulfides stabilise this stretch: Cys-71/Cys-81 and Cys-122/Cys-127.

The protein belongs to the neocarzinostatin family.

NCS has antibiotic activity (for Gram-positive bacteria) and antitumor activity (for certain mouse tumors). NCS binds non-covalently to a chromophore which is the cytotoxic and mutagenic component of the antibiotic. The chromophore binds to DNA as a weak intercalator and causes single- and double-strand breaks. The protein is Neocarzinostatin (ncsA) of Streptomyces carzinostaticus.